A 196-amino-acid chain; its full sequence is RNA-free ribonuclease P (196 aa).

It belongs to the HARP family.

The catalysed reaction is Endonucleolytic cleavage of RNA, removing 5'-extranucleotides from tRNA precursor.. Its function is as follows. RNA-free RNase P that catalyzes the removal of the 5'-leader sequence from pre-tRNA to produce the mature 5'-terminus. This Thermodesulfovibrio yellowstonii (strain ATCC 51303 / DSM 11347 / YP87) protein is RNA-free ribonuclease P.